Here is a 689-residue protein sequence, read N- to C-terminus: tRNA 5-methylaminomethyl-2-thiouridine biosynthesis bifunctional protein MnmC (689 aa).

The segment at 1–245 (MNQRPIQTAT…KREMLTGTLP (245 aa)) is tRNA (mnm(5)s(2)U34)-methyltransferase. An FAD-dependent cmnm(5)s(2)U34 oxidoreductase region spans residues 270–689 (IGGGIVSALT…RSPATQESSR (420 aa)).

In the N-terminal section; belongs to the methyltransferase superfamily. tRNA (mnm(5)s(2)U34)-methyltransferase family. The protein in the C-terminal section; belongs to the DAO family. It depends on FAD as a cofactor.

The protein resides in the cytoplasm. It catalyses the reaction 5-aminomethyl-2-thiouridine(34) in tRNA + S-adenosyl-L-methionine = 5-methylaminomethyl-2-thiouridine(34) in tRNA + S-adenosyl-L-homocysteine + H(+). Functionally, catalyzes the last two steps in the biosynthesis of 5-methylaminomethyl-2-thiouridine (mnm(5)s(2)U) at the wobble position (U34) in tRNA. Catalyzes the FAD-dependent demodification of cmnm(5)s(2)U34 to nm(5)s(2)U34, followed by the transfer of a methyl group from S-adenosyl-L-methionine to nm(5)s(2)U34, to form mnm(5)s(2)U34. The protein is tRNA 5-methylaminomethyl-2-thiouridine biosynthesis bifunctional protein MnmC of Yersinia pestis.